Here is a 394-residue protein sequence, read N- to C-terminus: Dimethyladenosine transferase 2, mitochondrial (394 aa).

A mitochondrion-targeting transit peptide spans 1–19 (MWVPGAGIPSRLTLSAFTR). V75, E123, and D149 together coordinate S-adenosyl-L-methionine. The segment at 326–327 (KR) is DNA-binding.

The protein belongs to the class I-like SAM-binding methyltransferase superfamily. rRNA adenine N(6)-methyltransferase family. KsgA subfamily. As to quaternary structure, homodimer. Component of the mitochondrial transcription initiation complex, composed at least of TFB2M, TFAM and POLRMT. In this complex TFAM recruits POLRMT to the promoter whereas TFB2M induces structural changes in POLRMT to enable promoter opening and trapping of the DNA non-template strand. Interacts with mitochondrial RNA polymerase POLRMT. Interacts with TFAM.

It localises to the mitochondrion. The catalysed reaction is adenosine in rRNA + S-adenosyl-L-methionine = N(6)-methyladenosine in rRNA + S-adenosyl-L-homocysteine + H(+). S-adenosyl-L-methionine-dependent rRNA methyltransferase which may methylate two specific adjacent adenosines in the loop of a conserved hairpin near the 3'-end of 12S mitochondrial rRNA. Component of the mitochondrial transcription initiation complex, composed at least of TFB2M, TFAM and POLRMT that is required for basal transcription of mitochondrial DNA. In this complex TFAM recruits POLRMT to a specific promoter whereas TFB2M induces structural changes in POLRMT to enable promoter opening and trapping of the DNA non-template strand. Stimulates transcription independently of the methyltransferase activity. The protein is Dimethyladenosine transferase 2, mitochondrial of Bos taurus (Bovine).